Reading from the N-terminus, the 197-residue chain is Holliday junction resolvase RecU (197 aa).

Residues 1–21 form a disordered region; it reads MVNYPSGVRAGGYPQKKKNQN. Residues Thr82, Asp84, Asp97, and Gln116 each contribute to the Mg(2+) site.

The protein belongs to the RecU family. Mg(2+) is required as a cofactor.

It is found in the cytoplasm. The catalysed reaction is Endonucleolytic cleavage at a junction such as a reciprocal single-stranded crossover between two homologous DNA duplexes (Holliday junction).. Endonuclease that resolves Holliday junction intermediates in genetic recombination. Cleaves mobile four-strand junctions by introducing symmetrical nicks in paired strands. Promotes annealing of linear ssDNA with homologous dsDNA. Required for DNA repair, homologous recombination and chromosome segregation. The sequence is that of Holliday junction resolvase RecU from Oenococcus oeni (strain ATCC BAA-331 / PSU-1).